Reading from the N-terminus, the 257-residue chain is Chlorocatechol 1,2-dioxygenase (257 aa).

The Fe cation site is built by Tyr134, Tyr169, His194, and His196.

This sequence belongs to the intradiol ring-cleavage dioxygenase family. Requires Fe(3+) as cofactor.

It carries out the reaction 4-chlorocatechol + O2 = 3-chloro-cis,cis-muconate + 2 H(+). It catalyses the reaction 3,5-dichlorocatechol + O2 = (2E,4E)-2,4-dichloromuconate + 2 H(+). This chain is Chlorocatechol 1,2-dioxygenase (clcA), found in Rhodococcus opacus (Nocardia opaca).